Here is a 305-residue protein sequence, read N- to C-terminus: tRNA dimethylallyltransferase (305 aa).

8–15 (GPTASGKT) is an ATP binding site. A substrate-binding site is contributed by 10–15 (TASGKT). The tract at residues 33-36 (DSQQ) is interaction with substrate tRNA.

The protein belongs to the IPP transferase family. As to quaternary structure, monomer. Mg(2+) serves as cofactor.

The enzyme catalyses adenosine(37) in tRNA + dimethylallyl diphosphate = N(6)-dimethylallyladenosine(37) in tRNA + diphosphate. Its function is as follows. Catalyzes the transfer of a dimethylallyl group onto the adenine at position 37 in tRNAs that read codons beginning with uridine, leading to the formation of N6-(dimethylallyl)adenosine (i(6)A). The sequence is that of tRNA dimethylallyltransferase from Anaeromyxobacter dehalogenans (strain 2CP-1 / ATCC BAA-258).